The sequence spans 96 residues: MNRWLAAGGILLGALVVFSFVSAGAWGGADGVAGDTITTINPSYEPWFQSLWTPPSGEIESLLFSIQAAVGGIIIGYYLGRDRPRGQSQDMGSDLP.

Transmembrane regions (helical) follow at residues 4 to 24 (WLAA…VSAG) and 59 to 79 (IESL…GYYL).

The protein belongs to the CbiN family. Forms an energy-coupling factor (ECF) transporter complex composed of an ATP-binding protein (A component, CbiO), a transmembrane protein (T component, CbiQ) and 2 possible substrate-capture proteins (S components, CbiM and CbiN) of unknown stoichimetry.

The protein localises to the cell membrane. It functions in the pathway cofactor biosynthesis; adenosylcobalamin biosynthesis. Functionally, part of the energy-coupling factor (ECF) transporter complex CbiMNOQ involved in cobalt import. The protein is Cobalt transport protein CbiN of Halobacterium salinarum (strain ATCC 29341 / DSM 671 / R1).